The sequence spans 556 residues: mRNA-capping enzyme subunit beta (556 aa).

2 disordered regions span residues 1–28 (MKPS…DNNV) and 56–217 (LPPV…QKTS). Positions 63–74 (VSTSDTGNTSHT) are enriched in polar residues. Residues 85–96 (ESDETDTDDEPG) are compositionally biased toward acidic residues. Composition is skewed to basic and acidic residues over residues 103-131 (TKFR…KDKQ) and 139-212 (IQLD…KDIF).

This sequence belongs to the fungal TPase family. As to quaternary structure, heterodimer. The mRNA-capping enzyme is composed of two separate chains alpha and beta, respectively a mRNA guanylyltransferase and an mRNA 5'-triphosphate monophosphatase. Requires Mg(2+) as cofactor.

The protein localises to the nucleus. The catalysed reaction is a 5'-end triphospho-ribonucleoside in mRNA + H2O = a 5'-end diphospho-ribonucleoside in mRNA + phosphate + H(+). In terms of biological role, first step of mRNA capping. Converts the 5'-triphosphate end of a nascent mRNA chain into a diphosphate end. This is mRNA-capping enzyme subunit beta (CET1) from Kluyveromyces lactis (strain ATCC 8585 / CBS 2359 / DSM 70799 / NBRC 1267 / NRRL Y-1140 / WM37) (Yeast).